The primary structure comprises 576 residues: D-lactate dehydrogenase [cytochrome], mitochondrial (576 aa).

In terms of domain architecture, FAD-binding PCMH-type spans 139 to 320; the sequence is EANQRPEIVL…TEATIKCHVR (182 aa).

It belongs to the FAD-binding oxidoreductase/transferase type 4 family. Requires FAD as cofactor. Zn(2+) is required as a cofactor.

Its subcellular location is the mitochondrion matrix. The catalysed reaction is (R)-lactate + 2 Fe(III)-[cytochrome c] = 2 Fe(II)-[cytochrome c] + pyruvate + 2 H(+). In terms of biological role, catalyzes the stereospecific oxidation of D-lactate to pyruvate. The protein is D-lactate dehydrogenase [cytochrome], mitochondrial (DLD1) of Kluyveromyces lactis (strain ATCC 8585 / CBS 2359 / DSM 70799 / NBRC 1267 / NRRL Y-1140 / WM37) (Yeast).